The following is a 191-amino-acid chain: Molybdenum cofactor guanylyltransferase (191 aa).

GTP-binding positions include 13 to 15 (LAG), lysine 26, aspartate 72, and aspartate 102. Residue aspartate 102 coordinates Mg(2+).

The protein belongs to the MobA family. Monomer. It depends on Mg(2+) as a cofactor.

Its subcellular location is the cytoplasm. The enzyme catalyses Mo-molybdopterin + GTP + H(+) = Mo-molybdopterin guanine dinucleotide + diphosphate. Transfers a GMP moiety from GTP to Mo-molybdopterin (Mo-MPT) cofactor (Moco or molybdenum cofactor) to form Mo-molybdopterin guanine dinucleotide (Mo-MGD) cofactor. The protein is Molybdenum cofactor guanylyltransferase of Pseudomonas putida (strain ATCC 700007 / DSM 6899 / JCM 31910 / BCRC 17059 / LMG 24140 / F1).